Reading from the N-terminus, the 420-residue chain is Phosphatidylinositol 5-phosphate 4-kinase type-2 gamma (420 aa).

Alanine 2 carries the post-translational modification N-acetylalanine. The residue at position 26 (serine 26) is a Phosphoserine. Residues 43–419 form the PIPK domain; sequence AADPLVGVFL…RFLDFISNIF (377 aa). Residues 69 to 75 are required for interaction with PIP5K1A; that stretch reads VMLLPDD. Serine 349 carries the post-translational modification Phosphoserine.

In terms of assembly, interacts with PIP5K1A; the interaction inhibits PIP5K1A kinase activity. In terms of processing, phosphorylated, phosphorylation is induced by EGF. Widely expressed, with the most abundant expression in kidney.

The protein resides in the endoplasmic reticulum. Its subcellular location is the cytoplasm. It carries out the reaction a 1,2-diacyl-sn-glycero-3-phospho-(1D-myo-inositol-5-phosphate) + ATP = a 1,2-diacyl-sn-glycero-3-phospho-(1D-myo-inositol-4,5-bisphosphate) + ADP + H(+). It catalyses the reaction 1,2-dihexadecanoyl-sn-glycero-3-phospho-(1D-myo-inositol-5-phosphate) + ATP = 1,2-dihexadecanoyl-sn-glycero-3-phospho-(1D-myo-inositol-4,5-bisphosphate) + ADP + H(+). The catalysed reaction is 1,2-dihexadecanoyl-sn-glycero-3-phospho-(1D-myo-inositol-5-phosphate) + GTP = 1,2-dihexadecanoyl-sn-glycero-3-phospho-(1D-myo-inositol-4,5-bisphosphate) + GDP + H(+). Its function is as follows. Phosphatidylinositol 5-phosphate 4-kinase with low enzymatic activity. May be a GTP sensor, has higher GTP-dependent kinase activity than ATP-dependent kinase activity. PIP4Ks negatively regulate insulin signaling through a catalytic-independent mechanism. They interact with PIP5Ks and suppress PIP5K-mediated PtdIns(4,5)P2 synthesis and insulin-dependent conversion to PtdIns(3,4,5)P3. In Rattus norvegicus (Rat), this protein is Phosphatidylinositol 5-phosphate 4-kinase type-2 gamma.